We begin with the raw amino-acid sequence, 246 residues long: MPHYRRILLKLSGEALLGDGQYGIAANTLDRIADELAEINAMGVEVAVVIGGGNIFRGAGLAASGMDRVTADHMGMLATVMNALAIQDALERRSVFCRVMSAIKINQVCEDYIRRRAVRHLEKGRVVIFAAGTGNPFFTTDSAASLRAVEVGAELLLKGTKVDGVYSSDPVRDPEAKRYQQLTYDEVLSKRLEVMDATAIVLCRDQAMRIMVFDITSPGTMVAAARGEPVGTVVDPGLPSAQEESS.

ATP is bound at residue lysine 10–glycine 13. Glycine 52 contributes to the UMP binding site. Glycine 53 and arginine 57 together coordinate ATP. UMP is bound by residues aspartate 72 and threonine 133–threonine 140. Residues threonine 160, tyrosine 166, and aspartate 169 each contribute to the ATP site.

It belongs to the UMP kinase family. In terms of assembly, homohexamer.

The protein localises to the cytoplasm. The catalysed reaction is UMP + ATP = UDP + ADP. It functions in the pathway pyrimidine metabolism; CTP biosynthesis via de novo pathway; UDP from UMP (UMPK route): step 1/1. Its activity is regulated as follows. Inhibited by UTP. Functionally, catalyzes the reversible phosphorylation of UMP to UDP. The sequence is that of Uridylate kinase from Halorhodospira halophila (strain DSM 244 / SL1) (Ectothiorhodospira halophila (strain DSM 244 / SL1)).